The primary structure comprises 217 residues: Urease accessory protein UreG (217 aa).

Positions 1–18 (MNAPHHPAHSTVRTKKLP) are enriched in basic residues. Residues 1–24 (MNAPHHPAHSTVRTKKLPPLRVGV) form a disordered region. GTP is bound at residue 26–33 (GPVGSGKT).

This sequence belongs to the SIMIBI class G3E GTPase family. UreG subfamily. In terms of assembly, homodimer. UreD, UreF and UreG form a complex that acts as a GTP-hydrolysis-dependent molecular chaperone, activating the urease apoprotein by helping to assemble the nickel containing metallocenter of UreC. The UreE protein probably delivers the nickel.

The protein resides in the cytoplasm. In terms of biological role, facilitates the functional incorporation of the urease nickel metallocenter. This process requires GTP hydrolysis, probably effectuated by UreG. This Paraburkholderia xenovorans (strain LB400) protein is Urease accessory protein UreG.